The following is a 194-amino-acid chain: 3-isopropylmalate dehydratase small subunit (194 aa).

This sequence belongs to the LeuD family. LeuD type 1 subfamily. In terms of assembly, heterodimer of LeuC and LeuD.

It carries out the reaction (2R,3S)-3-isopropylmalate = (2S)-2-isopropylmalate. The protein operates within amino-acid biosynthesis; L-leucine biosynthesis; L-leucine from 3-methyl-2-oxobutanoate: step 2/4. Its function is as follows. Catalyzes the isomerization between 2-isopropylmalate and 3-isopropylmalate, via the formation of 2-isopropylmaleate. This chain is 3-isopropylmalate dehydratase small subunit, found in Anoxybacillus flavithermus (strain DSM 21510 / WK1).